The primary structure comprises 32 residues: ITEEVAAAAAVGAGGYVXXLGEAGHHHLFNHE.

The polypeptide is Unknown protein from spot 206 of 2D-PAGE of etiolated coleoptile (Zea mays (Maize)).